A 507-amino-acid polypeptide reads, in one-letter code: Maturase K (507 aa).

This sequence belongs to the intron maturase 2 family. MatK subfamily.

The protein resides in the plastid. The protein localises to the chloroplast. Usually encoded in the trnK tRNA gene intron. Probably assists in splicing its own and other chloroplast group II introns. This Ranunculus acris (Meadow buttercup) protein is Maturase K.